We begin with the raw amino-acid sequence, 369 residues long: Cytoplasmic tRNA 2-thiolation protein 1 (369 aa).

The protein belongs to the TtcA family. CTU1/NCS6/ATPBD3 subfamily.

It is found in the cytoplasm. Its pathway is tRNA modification; 5-methoxycarbonylmethyl-2-thiouridine-tRNA biosynthesis. Its function is as follows. Plays a central role in 2-thiolation of mcm(5)S(2)U at tRNA wobble positions of tRNA(Lys), tRNA(Glu) and tRNA(Gln). Directly binds tRNAs and probably acts by catalyzing adenylation of tRNAs, an intermediate required for 2-thiolation. It is unclear whether it acts as a sulfurtransferase that transfers sulfur from thiocarboxylated URM1 onto the uridine of tRNAs at wobble position. Prior mcm(5) tRNA modification by the elongator complex is required for 2-thiolation. May also be involved in protein urmylation. This is Cytoplasmic tRNA 2-thiolation protein 1 from Meyerozyma guilliermondii (strain ATCC 6260 / CBS 566 / DSM 6381 / JCM 1539 / NBRC 10279 / NRRL Y-324) (Yeast).